Consider the following 558-residue polypeptide: Membrane protein insertase YidC (558 aa).

6 helical membrane-spanning segments follow: residues 5–25 (IINL…WQYF), 332–352 (AIDF…MNFF), 355–375 (YVGN…LLMF), 429–449 (LPIL…YVTI), 474–494 (LFGL…WPIL), and 520–540 (FMPL…LIYW).

The protein belongs to the OXA1/ALB3/YidC family. Type 1 subfamily. As to quaternary structure, interacts with the Sec translocase complex via SecD. Specifically interacts with transmembrane segments of nascent integral membrane proteins during membrane integration.

The protein resides in the cell inner membrane. Required for the insertion and/or proper folding and/or complex formation of integral membrane proteins into the membrane. Involved in integration of membrane proteins that insert both dependently and independently of the Sec translocase complex, as well as at least some lipoproteins. Aids folding of multispanning membrane proteins. In Rickettsia typhi (strain ATCC VR-144 / Wilmington), this protein is Membrane protein insertase YidC.